We begin with the raw amino-acid sequence, 123 residues long: uncharacterized protein (123 aa).

One can recognise a Rhodanese domain in the interval 17-117; that stretch reads LNNNAFLVDV…NNQDKGWKQN (101 aa).

This is an uncharacterized protein from Rickettsia prowazekii (strain Madrid E).